Here is a 258-residue protein sequence, read N- to C-terminus: Putative L-lactate dehydrogenase operon regulatory protein (258 aa).

Residues 6–74 (RRLSDEVADR…RGGGTFIRWR (69 aa)) form the HTH gntR-type domain. The H-T-H motif DNA-binding region spans 34–53 (ERQLAMQLGVSRNSLREALA).

Its function is as follows. May be a regulatory protein for the LCT genes. The sequence is that of Putative L-lactate dehydrogenase operon regulatory protein (lldR) from Escherichia coli (strain K12).